Reading from the N-terminus, the 651-residue chain is Acetyl-coenzyme A synthetase (651 aa).

CoA-binding positions include Arg-189–Lys-192, Thr-311, and Asn-335. Residues Gly-387 to Pro-389, Asp-411 to Thr-416, Asp-500, and Arg-515 each bind ATP. Ser-523 contacts CoA. An ATP-binding site is contributed by Arg-526. The Mg(2+) site is built by Val-537, His-539, and Val-542. CoA is bound at residue Arg-584. Lys-609 carries the post-translational modification N6-acetyllysine.

This sequence belongs to the ATP-dependent AMP-binding enzyme family. Mg(2+) is required as a cofactor. Acetylated. Deacetylation by the SIR2-homolog deacetylase activates the enzyme.

It carries out the reaction acetate + ATP + CoA = acetyl-CoA + AMP + diphosphate. Functionally, catalyzes the conversion of acetate into acetyl-CoA (AcCoA), an essential intermediate at the junction of anabolic and catabolic pathways. AcsA undergoes a two-step reaction. In the first half reaction, AcsA combines acetate with ATP to form acetyl-adenylate (AcAMP) intermediate. In the second half reaction, it can then transfer the acetyl group from AcAMP to the sulfhydryl group of CoA, forming the product AcCoA. The polypeptide is Acetyl-coenzyme A synthetase (Allorhizobium ampelinum (strain ATCC BAA-846 / DSM 112012 / S4) (Agrobacterium vitis (strain S4))).